The following is a 258-amino-acid chain: Hydroxyacylglutathione hydrolase (258 aa).

Zn(2+)-binding residues include His-52, His-54, Asp-56, His-57, His-109, Asp-126, and His-164.

Belongs to the metallo-beta-lactamase superfamily. Glyoxalase II family. In terms of assembly, monomer. Requires Zn(2+) as cofactor.

The enzyme catalyses an S-(2-hydroxyacyl)glutathione + H2O = a 2-hydroxy carboxylate + glutathione + H(+). It participates in secondary metabolite metabolism; methylglyoxal degradation; (R)-lactate from methylglyoxal: step 2/2. In terms of biological role, thiolesterase that catalyzes the hydrolysis of S-D-lactoyl-glutathione to form glutathione and D-lactic acid. The polypeptide is Hydroxyacylglutathione hydrolase (Xylella fastidiosa (strain M23)).